The following is a 78-amino-acid chain: Probable [Fe-S]-dependent transcriptional repressor (78 aa).

Positions 56, 61, 64, and 70 each coordinate iron-sulfur cluster.

It belongs to the FeoC family.

In terms of biological role, may function as a transcriptional regulator that controls feoABC expression. This is Probable [Fe-S]-dependent transcriptional repressor from Escherichia coli O9:H4 (strain HS).